The primary structure comprises 428 residues: Histidine--tRNA ligase (428 aa).

Belongs to the class-II aminoacyl-tRNA synthetase family. Homodimer.

The protein resides in the cytoplasm. The catalysed reaction is tRNA(His) + L-histidine + ATP = L-histidyl-tRNA(His) + AMP + diphosphate + H(+). The chain is Histidine--tRNA ligase from Thermosynechococcus vestitus (strain NIES-2133 / IAM M-273 / BP-1).